The following is a 249-amino-acid chain: 2,3-bisphosphoglycerate-dependent phosphoglycerate mutase (249 aa).

Residues Arg7–Asn14, Thr20–Gly21, Arg59, Glu86–Tyr89, Lys97, Arg113–Arg114, and Gly182–Asn183 contribute to the substrate site. Residue His8 is the Tele-phosphohistidine intermediate of the active site. Catalysis depends on Glu86, which acts as the Proton donor/acceptor.

The protein belongs to the phosphoglycerate mutase family. BPG-dependent PGAM subfamily.

The enzyme catalyses (2R)-2-phosphoglycerate = (2R)-3-phosphoglycerate. The protein operates within carbohydrate degradation; glycolysis; pyruvate from D-glyceraldehyde 3-phosphate: step 3/5. Catalyzes the interconversion of 2-phosphoglycerate and 3-phosphoglycerate. The polypeptide is 2,3-bisphosphoglycerate-dependent phosphoglycerate mutase (Lachnoclostridium phytofermentans (strain ATCC 700394 / DSM 18823 / ISDg) (Clostridium phytofermentans)).